Consider the following 318-residue polypeptide: L-lactate dehydrogenase (318 aa).

Residues Val20, Asp41, Lys46, Tyr71, and 85–86 (GA) each bind NAD(+). Residues Gln88, Arg94, and 126–129 (NPVD) each bind substrate. Residues 124–126 (ATN) and Ser149 contribute to the NAD(+) site. 154-157 (DTAR) is a binding site for substrate. Positions 159 and 174 each coordinate beta-D-fructose 1,6-bisphosphate. The active-site Proton acceptor is the His181. A Phosphotyrosine modification is found at Tyr226. Thr235 serves as a coordination point for substrate.

Belongs to the LDH/MDH superfamily. LDH family. As to quaternary structure, homotetramer.

The protein localises to the cytoplasm. The catalysed reaction is (S)-lactate + NAD(+) = pyruvate + NADH + H(+). It participates in fermentation; pyruvate fermentation to lactate; (S)-lactate from pyruvate: step 1/1. With respect to regulation, allosterically activated by fructose 1,6-bisphosphate (FBP). Catalyzes the conversion of lactate to pyruvate. This chain is L-lactate dehydrogenase, found in Priestia megaterium (Bacillus megaterium).